We begin with the raw amino-acid sequence, 257 residues long: Deoxyribose-phosphate aldolase (257 aa).

Asp102 acts as the Proton donor/acceptor in catalysis. Lys166 (schiff-base intermediate with acetaldehyde) is an active-site residue. The active-site Proton donor/acceptor is Lys198.

This sequence belongs to the DeoC/FbaB aldolase family. DeoC type 2 subfamily.

It localises to the cytoplasm. The enzyme catalyses 2-deoxy-D-ribose 5-phosphate = D-glyceraldehyde 3-phosphate + acetaldehyde. It functions in the pathway carbohydrate degradation; 2-deoxy-D-ribose 1-phosphate degradation; D-glyceraldehyde 3-phosphate and acetaldehyde from 2-deoxy-alpha-D-ribose 1-phosphate: step 2/2. Catalyzes a reversible aldol reaction between acetaldehyde and D-glyceraldehyde 3-phosphate to generate 2-deoxy-D-ribose 5-phosphate. The chain is Deoxyribose-phosphate aldolase from Shewanella piezotolerans (strain WP3 / JCM 13877).